The chain runs to 316 residues: PAK4-inhibitor inka2 (316 aa).

2 disordered regions span residues Arg43 to Thr74 and Tyr108 to Thr130. Residues Arg65 to Thr74 are compositionally biased toward basic and acidic residues. Residues Glu119–Glu129 are compositionally biased toward acidic residues. An inka box region spans residues Asp182–Glu219.

The protein belongs to the INKA family.

It localises to the nucleus. Its function is as follows. Inhibitor of the serine/threonine-protein kinase pak4/pak5. Acts by binding pak4/pak5 in a substrate-like manner, inhibiting the protein kinase activity. This Xenopus laevis (African clawed frog) protein is PAK4-inhibitor inka2.